Consider the following 546-residue polypeptide: Membrane protein insertase YidC (546 aa).

A helical transmembrane segment spans residues 8 to 28 (ILLATVLSVGILILWQVIFPT). The segment at 31–70 (VPPKPAPPPAAEVAKPAAPASPAPGAAAPAVPAPPPDAPE) is disordered. Residues 41–60 (AEVAKPAAPASPAPGAAAPA) show a composition bias toward low complexity. The next 5 helical transmembrane spans lie at 326-346 (IDYG…LYVM), 356-376 (WGVA…PLTY), 422-442 (LGGC…YAAL), 459-479 (LTAH…SFVM), and 498-518 (FFPG…TLYI).

This sequence belongs to the OXA1/ALB3/YidC family. Type 1 subfamily. Interacts with the Sec translocase complex via SecD. Specifically interacts with transmembrane segments of nascent integral membrane proteins during membrane integration.

Its subcellular location is the cell inner membrane. In terms of biological role, required for the insertion and/or proper folding and/or complex formation of integral membrane proteins into the membrane. Involved in integration of membrane proteins that insert both dependently and independently of the Sec translocase complex, as well as at least some lipoproteins. Aids folding of multispanning membrane proteins. This Anaeromyxobacter sp. (strain K) protein is Membrane protein insertase YidC.